The chain runs to 1018 residues: Probable inorganic carbon transporter subunit DabA 2 (1018 aa).

The Zn(2+) site is built by C489, D491, H674, and C689.

The protein belongs to the inorganic carbon transporter (TC 9.A.2) DabA family. As to quaternary structure, forms a complex with DabB. Zn(2+) serves as cofactor.

Its subcellular location is the cell inner membrane. In terms of biological role, part of an energy-coupled inorganic carbon pump. In Sorangium cellulosum (strain So ce56) (Polyangium cellulosum (strain So ce56)), this protein is Probable inorganic carbon transporter subunit DabA 2.